A 505-amino-acid polypeptide reads, in one-letter code: Forkhead box protein O4 (505 aa).

Disordered regions lie at residues 1-66 (MDPE…HSEP), 175-244 (SSWW…SPCP), and 257-276 (RPRS…PMRP). T32 is subject to Phosphothreonine; by PKB/AKT1. A required for interaction with FOXK1 region spans residues 97 to 215 (RRNAWGNQSY…RGRSKGPKKK (119 aa)). The segment at residues 100–188 (AWGNQSYAEL…MLNPDGGKGG (89 aa)) is a DNA-binding region (fork-head). Residue S197 is modified to Phosphoserine; by PKB/AKT1. Over residues 205–216 (LRGRSKGPKKKP) the composition is skewed to basic residues. Residues 257-271 (RPRSSSNASTVSTRL) are compositionally biased toward polar residues. At S262 the chain carries Phosphoserine; by PKB/AKT1.

In terms of assembly, interacts with CREBBP/CBP, MYOCD, SIRT1, SRF and YWHAZ. Acetylated by CREBBP/CBP and deacetylated by SIRT1. Binding of YWHAZ inhibits DNA-binding. Interacts with USP7; the interaction is enhanced in presence of hydrogen peroxide and occurs independently of TP53. Interacts with NLK, and this inhibits monoubiquitination and transcriptional activity. Interacts with FOXK1; the interaction inhibits MEF2C transactivation activity. In terms of processing, acetylation by CREBBP/CBP is induced by oxidative stress and inhibits transcriptional activity. Deacetylation by SIRT1 is NAD-dependent and stimulates transcriptional activity. Phosphorylation by PKB/AKT1 inhibits transcriptional activity and is responsible for cytoplasmic localization. May be phosphorylated at multiple sites by NLK. Post-translationally, monoubiquitinated; monoubiquitination is induced by oxidative stress and reduced by deacetylase inhibitors; results in its relocalization to the nucleus and its increased transcriptional activity. Deubiquitinated by USP7; deubiquitination is induced by oxidative stress; enhances its interaction with USP7 and consequently, deubiquitination; increases its translocation to the cytoplasm and inhibits its transcriptional activity. Hydrogene-peroxide-induced ubiquitination and USP7-mediated deubiquitination have no major effect on its protein stability. As to expression, strongly expressed in brown adipose tissue and weakly in white adipose tissue (at protein level). Expressed in skeletal muscle.

The protein resides in the cytoplasm. The protein localises to the nucleus. Functionally, transcription factor involved in the regulation of the insulin signaling pathway. Binds to insulin-response elements (IREs) and can activate transcription of IGFBP1. Down-regulates expression of HIF1A and suppresses hypoxia-induced transcriptional activation of HIF1A-modulated genes. Also involved in negative regulation of the cell cycle. Involved in increased proteasome activity in embryonic stem cells (ESCs) by activating expression of PSMD11 in ESCs, leading to enhanced assembly of the 26S proteasome, followed by higher proteasome activity. Represses smooth muscle cell differentiation by inhibiting the transcriptional coactivator activity of myocardin. The protein is Forkhead box protein O4 (Foxo4) of Mus musculus (Mouse).